Reading from the N-terminus, the 235-residue chain is Intron-encoded endonuclease I-SceI (235 aa).

It belongs to the LAGLIDADG endonuclease family. In terms of assembly, monomer. Requires Mg(2+) as cofactor.

It is found in the mitochondrion. Its function is as follows. Mitochondrial DNA endonuclease involved in intron homing. It introduces a specific double-strand break in the DNA of the 21S rRNA gene and thus mediates the insertion of an intron, containing its own coding sequence (group I intron), into an intronless gene. Specifically recognizes and cleaves the sequence 5'-TAGGGATAACAGGGTAAT-3'. The protein is Intron-encoded endonuclease I-SceI (SCEI) of Saccharomyces cerevisiae (strain ATCC 204508 / S288c) (Baker's yeast).